An 80-amino-acid polypeptide reads, in one-letter code: RNA-binding protein Hfq (80 aa).

Residues 9 to 69 (DVFLNQVRKE…ISTILPITPI (61 aa)) enclose the Sm domain.

It belongs to the Hfq family. As to quaternary structure, homohexamer.

Its function is as follows. RNA chaperone that binds small regulatory RNA (sRNAs) and mRNAs to facilitate mRNA translational regulation in response to envelope stress, environmental stress and changes in metabolite concentrations. Also binds with high specificity to tRNAs. This is RNA-binding protein Hfq from Alkaliphilus metalliredigens (strain QYMF).